Reading from the N-terminus, the 537-residue chain is RNA polymerase sigma-54 factor 2 (537 aa).

The interval 52-90 is disordered; sequence ANDEASGGEAPAEAGQFSDSDGGHNDEPGGGPGEAFEPG. Residues 55-66 show a composition bias toward low complexity; the sequence is EASGGEAPAEAG. The H-T-H motif DNA-binding region spans 403–422; the sequence is NLKAVADAIQMHESTVSRVT. The RPON box motif lies at 492–500; sequence ARRTVAKYR. The disordered stretch occupies residues 507 to 537; it reads SSVQRRRDKQSALGNVLSTAMSDRSRNPEPA. Residues 518–528 show a composition bias toward polar residues; the sequence is ALGNVLSTAMS.

This sequence belongs to the sigma-54 factor family.

Functionally, sigma factors are initiation factors that promote the attachment of RNA polymerase to specific initiation sites and are then released. This sigma factor is responsible for the expression of the nitrogen fixation genes. The polypeptide is RNA polymerase sigma-54 factor 2 (rpoN2) (Bradyrhizobium diazoefficiens (strain JCM 10833 / BCRC 13528 / IAM 13628 / NBRC 14792 / USDA 110)).